The following is a 248-amino-acid chain: Tetraspanin-17 (248 aa).

At 1 to 7 (MSEVRTG) the chain is on the cytoplasmic side. The chain crosses the membrane as a helical span at residues 8 to 28 (FLTMTTIILISIGLTMMGTGL). The Extracellular portion of the chain corresponds to 29–44 (YQKTTMSSCIRETSSQ). The chain crosses the membrane as a helical span at residues 45-65 (FTLLGLLLLLIPQIGLYGICC). Residues 66 to 69 (RSKR) lie on the Cytoplasmic side of the membrane. Residues 70–90 (LFNFFFYGMVVLIIIVSYYSI) form a helical membrane-spanning segment. The Extracellular portion of the chain corresponds to 91–210 (KCSIYNTTFG…ILKAIVHQWK (120 aa)). N-linked (GlcNAc...) asparagine glycosylation is found at N96, N109, and N141. The helical transmembrane segment at 211–231 (YLSMFAYPALVLSCISLAIAW) threads the bilayer. At 232 to 248 (SLKETIHENEDYRGSYS) the chain is on the cytoplasmic side.

It belongs to the tetraspanin (TM4SF) family.

It localises to the membrane. In terms of biological role, may be involved in the regulation of cell differentiation. The protein is Tetraspanin-17 (TET17) of Arabidopsis thaliana (Mouse-ear cress).